Reading from the N-terminus, the 85-residue chain is Conotoxin Lt28.4 (85 aa).

The first 21 residues, Met1–Ala21, serve as a signal peptide directing secretion. Residues Val22–Lys40 constitute a propeptide that is removed on maturation.

The protein belongs to the conotoxin D superfamily. In terms of processing, contains 5 disulfide bonds. As to expression, expressed by the venom duct.

It is found in the secreted. Probable neurotoxin. The polypeptide is Conotoxin Lt28.4 (Conus litteratus (Lettered cone)).